The chain runs to 497 residues: Nuclear pore complex protein npp-16 (497 aa).

Disordered stretches follow at residues 76–95 (VPRR…APRK), 210–308 (TKKS…SAPK), and 359–379 (MENQ…GEYV). Basic and acidic residues-rich tracts occupy residues 231-240 (KDGDKPKETP) and 250-260 (KPAEPSEEPKA). The interval 390–497 (EPDAVLSSKV…FTDKILEVAV (108 aa)) is ranBD1.

In terms of assembly, interacts with importin beta imb-1. Interacts with DNA-directed RNA polymerase III subunit rpc-1. Interacts with TATA-box-binding protein tbp-1. Interacts with GTF3C5 homolog tftc-5. Interacts with GTF3C3 homolog tftc-3.

Its subcellular location is the nucleus. The protein localises to the nuclear pore complex. The protein resides in the nucleus membrane. Component of the nuclear pore complex. Plays a direct role in nuclear protein import. Required for anoxia-induced prophase arrest; may function in concert with cdk-1 to arrest prophase blastomeres in response to anoxia. This Caenorhabditis elegans protein is Nuclear pore complex protein npp-16.